A 439-amino-acid polypeptide reads, in one-letter code: Xylose isomerase (439 aa).

Residues His101 and Asp104 contribute to the active site. Positions 232, 268, 271, 296, 307, 309, and 339 each coordinate Mg(2+).

It belongs to the xylose isomerase family. As to quaternary structure, homotetramer. The cofactor is Mg(2+).

It is found in the cytoplasm. The catalysed reaction is alpha-D-xylose = alpha-D-xylulofuranose. In Haemophilus influenzae (strain PittGG), this protein is Xylose isomerase.